A 344-amino-acid chain; its full sequence is Lipase chaperone (344 aa).

A helical membrane pass occupies residues 14-34; it reads AAIYGVVGLAAIAGVAMWSGA.

The protein belongs to the lipase chaperone family.

Its subcellular location is the cell inner membrane. Its function is as follows. May be involved in the folding of the extracellular lipase during its passage through the periplasm. The chain is Lipase chaperone from Burkholderia cenocepacia (strain HI2424).